A 308-amino-acid polypeptide reads, in one-letter code: Formamidopyrimidine-DNA glycosylase (308 aa).

Proline 2 (schiff-base intermediate with DNA) is an active-site residue. The active-site Proton donor is the glutamate 3. Lysine 61 (proton donor; for beta-elimination activity) is an active-site residue. Residues histidine 100, arginine 120, and arginine 181 each contribute to the DNA site. Residues 267 to 301 (AVYGQEGRPCPRCGALVRRDAFMNRSSFSCPVCQP) form an FPG-type zinc finger. Arginine 291 acts as the Proton donor; for delta-elimination activity in catalysis.

Belongs to the FPG family. In terms of assembly, monomer. Requires Zn(2+) as cofactor.

The catalysed reaction is Hydrolysis of DNA containing ring-opened 7-methylguanine residues, releasing 2,6-diamino-4-hydroxy-5-(N-methyl)formamidopyrimidine.. It catalyses the reaction 2'-deoxyribonucleotide-(2'-deoxyribose 5'-phosphate)-2'-deoxyribonucleotide-DNA = a 3'-end 2'-deoxyribonucleotide-(2,3-dehydro-2,3-deoxyribose 5'-phosphate)-DNA + a 5'-end 5'-phospho-2'-deoxyribonucleoside-DNA + H(+). Its function is as follows. Involved in base excision repair of DNA damaged by oxidation or by mutagenic agents. Acts as a DNA glycosylase that recognizes and removes damaged bases. Has a preference for oxidized purines, such as 7,8-dihydro-8-oxoguanine (8-oxoG). Has AP (apurinic/apyrimidinic) lyase activity and introduces nicks in the DNA strand. Cleaves the DNA backbone by beta-delta elimination to generate a single-strand break at the site of the removed base with both 3'- and 5'-phosphates. This Kineococcus radiotolerans (strain ATCC BAA-149 / DSM 14245 / SRS30216) protein is Formamidopyrimidine-DNA glycosylase.